The primary structure comprises 435 residues: Deoxybrevianamide E synthase (435 aa).

Residues 1 to 28 (MTAPELRAPAGHPQEPPARSSPAQALSS) form a disordered region. Residue Glu96 coordinates brevianamide F. Dimethylallyl diphosphate-binding residues include Arg110, Lys195, Tyr197, Lys265, Tyr267, Tyr354, Tyr419, and Tyr423.

The protein belongs to the tryptophan dimethylallyltransferase family. In terms of assembly, monomer.

The catalysed reaction is brevianamide F + dimethylallyl diphosphate = deoxybrevianamide E + diphosphate. It functions in the pathway alkaloid biosynthesis. Functionally, deoxybrevianamide E synthase; part of the gene cluster that mediates the biosynthesis of notoamide, a fungal indole alkaloid that belongs to a family of natural products containing a characteristic bicyclo[2.2.2]diazaoctane core. The first step of notoamide biosynthesis involves coupling of L-proline and L-tryptophan by the bimodular NRPS notE', to produce cyclo-L-tryptophan-L-proline called brevianamide F. The reverse prenyltransferase notF' then acts as a deoxybrevianamide E synthase and converts brevianamide F to deoxybrevianamide E via reverse prenylation at C-2 of the indole ring leading to the bicyclo[2.2.2]diazaoctane core. Deoxybrevianamide E is further hydroxylated at C-6 of the indole ring, likely catalyzed by the cytochrome P450 monooxygenase notG', to yield 6-hydroxy-deoxybrevianamide E. 6-hydroxy-deoxybrevianamide E is a specific substrate of the prenyltransferase notC' for normal prenylation at C-7 to produce 6-hydroxy-7-prenyl-deoxybrevianamide, also called notoamide S. As the proposed pivotal branching point in notoamide biosynthesis, notoamide S can be diverted to notoamide E through an oxidative pyran ring closure putatively catalyzed by either notH' cytochrome P450 monooxygenase or the notD' FAD-linked oxidoreductase. This step would be followed by an indole 2,3-epoxidation-initiated pinacol-like rearrangement catalyzed by the notB' FAD-dependent monooxygenase leading to the formation of notoamide C and notoamide D. On the other hand notoamide S is converted to notoamide T by notH' (or notD'), a bifunctional oxidase that also functions as the intramolecular Diels-Alderase responsible for generation of (-)-notoamide T. To generate antipodal (+)-notoaminide T, notH (or notD) in Aspergillus strain MF297-2 is expected to catalyze a Diels-Alder reaction leading to the opposite stereochemistry. The remaining oxidoreductase notD' (or notH') likely catalyzes the oxidative pyran ring formation to yield (-)-stephacidin A. The FAD-dependent monooxygenase notI' is highly similar to notB' and is predicted to catalyze a similar conversion from (-)-stephacidin A to (+)-notoamide B via the 2,3-epoxidation of (-)-stephacidin A followed by a pinacol-type rearrangement. Finally, it remains unclear which enzyme could be responsible for the final hydroxylation steps leading to notoamide A and sclerotiamide. This is Deoxybrevianamide E synthase from Aspergillus versicolor.